Here is a 1715-residue protein sequence, read N- to C-terminus: Sodium channel protein type 4 subunit alpha B (1715 aa).

The Cytoplasmic segment spans residues Met1 to Ser126. An I repeat occupies Leu108–Asn431. The chain crosses the membrane as a helical span at residues Leu127–Leu145. At Ser146–Ser152 the chain is on the extracellular side. A helical membrane pass occupies residues Lys153–Ser173. Residues Arg174 to Pro187 are Cytoplasmic-facing. Residues Trp188 to Val205 form a helical membrane-spanning segment. Residues Asp206–Ser211 lie on the Extracellular side of the membrane. An N-linked (GlcNAc...) asparagine glycan is attached at Asn209. The chain crosses the membrane as a helical span at residues Val212–Ile228. Topologically, residues Pro229–Asp247 are cytoplasmic. Residues Ala248 to Phe267 traverse the membrane as a helical segment. The Extracellular portion of the chain corresponds to Met268 to Ser368. Cys275 and Cys337 are joined by a disulfide. Asn284, Asn304, and Asn339 each carry an N-linked (GlcNAc...) asparagine glycan. An intrachain disulfide couples Cys346 to Cys352. The pore-forming intramembrane region spans Phe369–Leu393. The Extracellular segment spans residues Arg394–Tyr400. A helical membrane pass occupies residues Met401–Ala421. Residues Val422–Pro515 lie on the Cytoplasmic side of the membrane. The II repeat unit spans residues Cys497–Ala768. Residues Phe516–Met534 traverse the membrane as a helical segment. Residues Glu535–Glu545 lie on the Extracellular side of the membrane. A helical transmembrane segment spans residues Leu546–Lys565. The Cytoplasmic segment spans residues Ile566–Trp579. Residues Asn580 to Val599 traverse the membrane as a helical segment. Residues Gln600–Gly601 are Extracellular-facing. A helical transmembrane segment spans residues Leu602–Ser619. Over Trp620–Gly635 the chain is Cytoplasmic. A helical transmembrane segment spans residues Ala636 to Val654. The Extracellular portion of the chain corresponds to Gly655–Asp683. Cys668 and Cys674 are joined by a disulfide. An intramembrane region (pore-forming) is located at residues Phe684–Trp704. Residues Asp705–Cys715 lie on the Extracellular side of the membrane. Cys706 and Cys715 are joined by a disulfide. Residues Leu716–Phe734 form a helical membrane-spanning segment. At Leu735 to Tyr915 the chain is on the cytoplasmic side. Residues Glu824–Asp865 form a disordered region. Over residues Ala825–Asp838 the composition is skewed to acidic residues. The III repeat unit spans residues Lys896–Leu1211. Residues Phe916–Phe933 traverse the membrane as a helical segment. Over Glu934–Thr946 the chain is Extracellular. Residues Ile947–Leu965 traverse the membrane as a helical segment. Residues Lys966–Ala979 lie on the Cytoplasmic side of the membrane. A helical membrane pass occupies residues Trp980–Asn998. Topologically, residues Ile999–Gly1006 are extracellular. A helical membrane pass occupies residues Ala1007–Arg1025. Topologically, residues Phe1026–Ser1042 are cytoplasmic. Residues Ile1043 to Val1062 form a helical membrane-spanning segment. The Extracellular segment spans residues Asn1063–Val1115. A disulfide bridge connects residues Cys1072 and Cys1092. N-linked (GlcNAc...) asparagine glycosylation is found at Asn1074 and Asn1088. Positions Gly1116–Ala1137 form an intramembrane region, pore-forming. The Extracellular segment spans residues Ala1138–Ile1154. Residues Tyr1155–Ile1176 form a helical membrane-spanning segment. Residues Gly1177–Ile1239 are Cytoplasmic-facing. The important for rapid channel inactivation stretch occupies residues Ile1195–Met1197. An IV repeat occupies Val1220–Gln1517. Residues Phe1240–Val1257 form a helical membrane-spanning segment. At Glu1258–Asp1268 the chain is on the extracellular side. The chain crosses the membrane as a helical span at residues Ile1269–Leu1287. The Cytoplasmic portion of the chain corresponds to Lys1288–Ile1299. Residues Gly1300–Leu1317 traverse the membrane as a helical segment. Topologically, residues Leu1318 to Thr1330 are extracellular. The chain crosses the membrane as a helical span at residues Leu1331–Ile1347. At Arg1348 to Ala1366 the chain is on the cytoplasmic side. The chain crosses the membrane as a helical span at residues Leu1367–Phe1384. Residues Gly1385–Thr1406 are Extracellular-facing. An intramembrane region (pore-forming) is located at residues Phe1407 to Pro1429. At Ile1430 to Gly1458 the chain is on the extracellular side. The cysteines at positions 1437 and 1452 are disulfide-linked. The chain crosses the membrane as a helical span at residues Ile1459–Ile1481. Residues Leu1482–Val1715 lie on the Cytoplasmic side of the membrane. The IQ domain maps to Glu1611–Glu1640.

It belongs to the sodium channel (TC 1.A.1.10) family. Nav1.4/SCN4A subfamily. In terms of assembly, voltage-gated sodium (Nav) channels consist of an ion-conducting alpha subunit which is functional on its own associated with regulatory beta subunits.

Its subcellular location is the cell membrane. The catalysed reaction is Na(+)(in) = Na(+)(out). Functionally, pore-forming subunit of a voltage-gated sodium (Nav) channel that directly mediates the depolarizing phase of action potentials in excitable membranes. Navs, also called VGSCs (voltage-gated sodium channels) or VDSCs (voltage-dependent sodium channels), operate by switching between closed and open conformations depending on the voltage difference across the membrane. In the open conformation they allow Na(+) ions to selectively pass through the pore, along their electrochemical gradient. The influx of Na+ ions provokes membrane depolarization, initiating the propagation of electrical signals throughout cells and tissues. In Tetraodon nigroviridis (Spotted green pufferfish), this protein is Sodium channel protein type 4 subunit alpha B (scn4ab).